A 176-amino-acid chain; its full sequence is dCTP deaminase (176 aa).

DCTP-binding positions include 99–104 (RSTLAR) and aspartate 115. Glutamate 125 acts as the Proton donor/acceptor in catalysis. Glutamine 163 serves as a coordination point for dCTP.

Belongs to the dCTP deaminase family. In terms of assembly, homotrimer.

It carries out the reaction dCTP + H2O + H(+) = dUTP + NH4(+). Its pathway is pyrimidine metabolism; dUMP biosynthesis; dUMP from dCTP (dUTP route): step 1/2. Its function is as follows. Catalyzes the deamination of dCTP to dUTP. The chain is dCTP deaminase from Pyrobaculum arsenaticum (strain DSM 13514 / JCM 11321 / PZ6).